Reading from the N-terminus, the 670-residue chain is Rhophilin-1 (670 aa).

Residues 1 to 20 (MILEERPDGAGAGEESPRLQ) are disordered. Residues 23 to 97 (DSLTQIQCGQ…LEELSGGVDP (75 aa)) form the REM-1 domain. Phosphoserine is present on serine 24. The BRO1 domain maps to 108–457 (PMIPLGLKET…LAKYAELDRE (350 aa)). Residues 513-592 (PVHLTRGEGG…ASLQVVSLLP (80 aa)) enclose the PDZ domain. The disordered stretch occupies residues 616–670 (QREHGCKTPASTWASPRPLLNWSRKAQQGKTGGCPQPCAPVKPAPPSSLKHPGWP). Residues 652–661 (PCAPVKPAPP) show a composition bias toward pro residues.

The protein belongs to the RHPN family. As to quaternary structure, binds specifically to GTP-Rho. Interacts with ROPN1.

Its function is as follows. Has no enzymatic activity. May serve as a target for Rho, and interact with some cytoskeletal component upon Rho binding or relay a Rho signal to other molecules. This is Rhophilin-1 from Homo sapiens (Human).